The following is a 103-amino-acid chain: Cytotoxin-like protein TA-BMBGT3 (103 aa).

Residues 1–21 form the signal peptide; it reads MKTLLLTLVVVTIICLDLGYT. Disulfide bonds link C24–C45, C27–C37, C38–C72, C76–C90, and C91–C96.

It belongs to the three-finger toxin family. Ancestral subfamily. Orphan group XVII sub-subfamily. Expressed by the venom gland.

The protein localises to the secreted. This is Cytotoxin-like protein TA-BMBGT3 from Bungarus multicinctus (Many-banded krait).